A 686-amino-acid polypeptide reads, in one-letter code: Protein SDA1 homolog (686 aa).

3 positions are modified to phosphoserine: Ser232, Ser234, and Ser236. Positions 254-315 form a coiled coil; the sequence is KKGSKNKKKL…SCKERFEVKM (62 aa). A disordered region spans residues 484-508; the sequence is LEKEENTENDEDGWESASLSEEEED. Positions 490–508 are enriched in acidic residues; sequence TENDEDGWESASLSEEEED. Phosphothreonine is present on Thr551. A disordered region spans residues 563-586; it reads MKKEMDAAPGKAQKRKYLDMDSDE. Ser584, Ser588, and Ser594 each carry phosphoserine. A disordered region spans residues 604–649; the sequence is KPKSDKETRLATAMAGRTDRKEFVRKKTKINPFSSSTNKEKKKQKN.

This sequence belongs to the SDA1 family.

Its subcellular location is the nucleus. It is found in the nucleolus. In terms of biological role, required for 60S pre-ribosomal subunits export to the cytoplasm. The chain is Protein SDA1 homolog (Sdad1) from Rattus norvegicus (Rat).